The primary structure comprises 253 residues: ATP synthase subunit a (253 aa).

Helical transmembrane passes span 27–47 (ISFTNASGFMLLGVVLVIGFF), 87–107 (FFPFVFTLFFFILFANLIGMV), 117–137 (IIVTGALAMTVILMVIVVGLI), 146–166 (LFAPSGAPLPIYIILTPIEII), 196–216 (FTVMLIGAGAIYIPVAALAFA), and 224–244 (LEFLVAGLQAYVFAILTCVYL).

This sequence belongs to the ATPase A chain family. As to quaternary structure, F-type ATPases have 2 components, CF(1) - the catalytic core - and CF(0) - the membrane proton channel. CF(1) has five subunits: alpha(3), beta(3), gamma(1), delta(1), epsilon(1). CF(0) has three main subunits: a(1), b(2) and c(9-12). The alpha and beta chains form an alternating ring which encloses part of the gamma chain. CF(1) is attached to CF(0) by a central stalk formed by the gamma and epsilon chains, while a peripheral stalk is formed by the delta and b chains.

It is found in the cell inner membrane. In terms of biological role, key component of the proton channel; it plays a direct role in the translocation of protons across the membrane. The polypeptide is ATP synthase subunit a (Hyphomonas neptunium (strain ATCC 15444)).